A 291-amino-acid chain; its full sequence is MIIIGGTATNWIDERLSKLLVSRLVKIEHKVFPDGESYIRIPERLMGEDVLVVQSLYPPQDKHLVELFFILETLNDMKANKITVIIPYLAYSRQNRRFKEGEAVSTKTVLNLIKKTGATSLMVVEPHHYEELQYFDGEVKIADPIPDIARVINGKVTNPFVLAPDKGALNRAKRLSQELGCDYSYLEKQRDLTTGEVRVTNLPDLRLDGKEVILVDDIISTGGTMVQASQIAYSKGAKKVIATAVHSLFVENAYDRLINAGIKEIITTNTIPQDTSKVTIVDVSESIARKI.

ATP is bound by residues 34-36 (DGE) and 93-94 (RQ). Positions 127 and 165 each coordinate Mg(2+). K188 is a catalytic residue. Residues R190, D216, and 220-224 (STGGT) contribute to the D-ribose 5-phosphate site.

Belongs to the ribose-phosphate pyrophosphokinase family. Class III (archaeal) subfamily. Requires Mg(2+) as cofactor.

The protein resides in the cytoplasm. It catalyses the reaction D-ribose 5-phosphate + ATP = 5-phospho-alpha-D-ribose 1-diphosphate + AMP + H(+). It participates in metabolic intermediate biosynthesis; 5-phospho-alpha-D-ribose 1-diphosphate biosynthesis; 5-phospho-alpha-D-ribose 1-diphosphate from D-ribose 5-phosphate (route I): step 1/1. Its function is as follows. Involved in the biosynthesis of the central metabolite phospho-alpha-D-ribosyl-1-pyrophosphate (PRPP) via the transfer of pyrophosphoryl group from ATP to 1-hydroxyl of ribose-5-phosphate (Rib-5-P). The sequence is that of Ribose-phosphate pyrophosphokinase from Sulfolobus acidocaldarius (strain ATCC 33909 / DSM 639 / JCM 8929 / NBRC 15157 / NCIMB 11770).